Consider the following 258-residue polypeptide: Trans-aconitate 2-methyltransferase (258 aa).

Belongs to the methyltransferase superfamily. Tam family.

The protein localises to the cytoplasm. It catalyses the reaction trans-aconitate + S-adenosyl-L-methionine = (E)-3-(methoxycarbonyl)pent-2-enedioate + S-adenosyl-L-homocysteine. Its function is as follows. Catalyzes the S-adenosylmethionine monomethyl esterification of trans-aconitate. The chain is Trans-aconitate 2-methyltransferase from Methylobacterium nodulans (strain LMG 21967 / CNCM I-2342 / ORS 2060).